We begin with the raw amino-acid sequence, 194 residues long: MSKQRKSVTFFNNALDESPVETIFPMEKENKNRITPGLTELIETNMNLRRKCKLENCPKWDPNPDRARKVAYIQTLIVTQSSKLFMDEVDSFFNNRYVMSRDPTAQITVGKRMMGLTTMVVSGSLELELRLSKANKCVVCCKSGQPNNICDGCHEDVELVREVIDSLGMNYRNLFVTNDYDENDYESDIESIDV.

This is an uncharacterized protein from Ostreid herpesvirus 1 (isolate France) (OsHV-1).